The sequence spans 224 residues: MSEDHFDDELDGQGGGGSRHPMAARFRGYLPVVVDVETGGFNSATDALLEIAATTIAMDEKGFVYPDHTYFFRVEPFEGANVEPAALEFTGIKLDHPLRMAVSEETALTDIFRGVRKALKANGCKRAILVGHNSSFDLGFLNAAVARLDMKRNPFHPFSSFDTATLAGLAYGQTVLAKACQAADIDFDGREAHSARYDTEKTAELFCGIVNRWKQMGGWEDFDD.

One can recognise an Exonuclease domain in the interval 32 to 206 (VVVDVETGGF…YDTEKTAELF (175 aa)). The Mg(2+) site is built by Asp-35, Glu-37, His-193, and Asp-198. His-193 acts as the Proton donor/acceptor in catalysis.

Belongs to the RNase T family. Homodimer. Mg(2+) is required as a cofactor.

Its function is as follows. Trims short 3' overhangs of a variety of RNA species, leaving a one or two nucleotide 3' overhang. Responsible for the end-turnover of tRNA: specifically removes the terminal AMP residue from uncharged tRNA (tRNA-C-C-A). Also appears to be involved in tRNA biosynthesis. This is Ribonuclease T from Pseudomonas fluorescens (strain Pf0-1).